The following is a 235-amino-acid chain: Small ribosomal subunit protein uS2 (235 aa).

It belongs to the universal ribosomal protein uS2 family.

The polypeptide is Small ribosomal subunit protein uS2 (Thermoanaerobacter pseudethanolicus (strain ATCC 33223 / 39E) (Clostridium thermohydrosulfuricum)).